The chain runs to 111 residues: Universal stress protein B (111 aa).

2 helical membrane passes run 1 to 21 (MISTIALFWALCVVCVVNMAR) and 90 to 110 (FILTSALCGLVVVSLIALMIW).

It belongs to the universal stress protein B family.

Its subcellular location is the cell inner membrane. This is Universal stress protein B from Klebsiella pneumoniae (strain 342).